Here is a 264-residue protein sequence, read N- to C-terminus: MKAVVLAVAVLFLTGSQARHFWQQDEPQSPWDRVKDFATVYVDAVKDSGREYVSQFETSALGKQLNLNLLENWDTFGSTFGRLQEQLGPVTREFWDSLEKDTDWLRQEMNKDLEEVKQKVQPYLDEFQKKWEEEVERYRPKVEPLGAQLREGARQKLEELQKQLVPLGEDLRDRARLHVDALRTKLAPYSDQMRDRLAERLTALRDNPKLAEYHARATEHLKKLGEKTKPTLEDLRQGLMPWLESLKAKALSVLDEATQKLNTQ.

The first 18 residues, M1 to A18, serve as a signal peptide directing secretion. Repeat copies occupy residues L67–G88 and P89–N110. The segment at L67–Q264 is 10 X approximate tandem repeats. M109 carries the methionine sulfoxide modification. The stretch at K111–Q121 is one 3; half-length repeat. Tandem repeats lie at residues P122–E143, P144–V165, and P166–A187. A 7; truncated repeat occupies P188 to N207. Residue M193 is modified to Methionine sulfoxide. Repeat 8 spans residues P208–K229. The 9; half-length repeat unit spans residues P230–M240. M240 is modified (methionine sulfoxide). The stretch at P241–Q264 is repeat 10.

It belongs to the apolipoprotein A1/A4/E family. As to quaternary structure, homodimer. Interacts with APOA1BP and CLU. Component of a sperm activating protein complex (SPAP), consisting of APOA1, an immunoglobulin heavy chain, an immunoglobulin light chain and albumin. Interacts with NDRG1. Interacts with SCGB3A2. Interacts with NAXE and YJEFN3. Post-translationally, glycosylated. In terms of processing, palmitoylated. Phosphorylation sites are present in the extracellular medium.

The protein localises to the secreted. Functionally, participates in the reverse transport of cholesterol from tissues to the liver for excretion by promoting cholesterol efflux from tissues and by acting as a cofactor for the lecithin cholesterol acyltransferase (LCAT). As part of the SPAP complex, activates spermatozoa motility. The protein is Apolipoprotein A-I (Apoa1) of Nannospalax galili (Northern Israeli blind subterranean mole rat).